The chain runs to 475 residues: ATP synthase subunit beta (475 aa).

155–162 (GGAGVGKT) is a binding site for ATP.

This sequence belongs to the ATPase alpha/beta chains family. In terms of assembly, F-type ATPases have 2 components, CF(1) - the catalytic core - and CF(0) - the membrane proton channel. CF(1) has five subunits: alpha(3), beta(3), gamma(1), delta(1), epsilon(1). CF(0) has three main subunits: a(1), b(2) and c(9-12). The alpha and beta chains form an alternating ring which encloses part of the gamma chain. CF(1) is attached to CF(0) by a central stalk formed by the gamma and epsilon chains, while a peripheral stalk is formed by the delta and b chains.

The protein resides in the cell inner membrane. It catalyses the reaction ATP + H2O + 4 H(+)(in) = ADP + phosphate + 5 H(+)(out). In terms of biological role, produces ATP from ADP in the presence of a proton gradient across the membrane. The catalytic sites are hosted primarily by the beta subunits. The chain is ATP synthase subunit beta from Rhizobium etli (strain ATCC 51251 / DSM 11541 / JCM 21823 / NBRC 15573 / CFN 42).